The sequence spans 349 residues: Isopentenyl-diphosphate delta-isomerase (349 aa).

R9–K10 is a binding site for substrate. FMN-binding positions include A65 to T67, S95, and N124. Position 95–97 (S95–H97) interacts with substrate. Residue Q154 coordinates substrate. E155 provides a ligand contact to Mg(2+). Residues K186, S211, T216, G262–R264, and S283–R284 each bind FMN.

The protein belongs to the IPP isomerase type 2 family. In terms of assembly, homooctamer. Dimer of tetramers. It depends on FMN as a cofactor. Requires NADPH as cofactor. The cofactor is Mg(2+).

Its subcellular location is the cytoplasm. It carries out the reaction isopentenyl diphosphate = dimethylallyl diphosphate. Its function is as follows. Involved in the biosynthesis of isoprenoids. Catalyzes the 1,3-allylic rearrangement of the homoallylic substrate isopentenyl (IPP) to its allylic isomer, dimethylallyl diphosphate (DMAPP). In Staphylococcus aureus, this protein is Isopentenyl-diphosphate delta-isomerase.